Here is a 196-residue protein sequence, read N- to C-terminus: MTKLIVGLGNPGEEHEEDRHNAGFWFVDALAKQLGVRFESEKRFHGKVAKAKWEGEDLFLLKPSTYMNLSGQSVGALCRFHKIMPADILVVQDELDIKPGSARLKLGGGTGGHNGLKDIQAHLSTPNYWRLRLGIGHPRDIAGDGRPMDVADYVLRRPQLTEQKLINTSIENGLNILSLFLKGDTQTAMMELHSKG.

H15 is a binding site for tRNA. H20 serves as the catalytic Proton acceptor. TRNA-binding residues include Y66, N68, and N114.

The protein belongs to the PTH family. Monomer.

Its subcellular location is the cytoplasm. It catalyses the reaction an N-acyl-L-alpha-aminoacyl-tRNA + H2O = an N-acyl-L-amino acid + a tRNA + H(+). Functionally, hydrolyzes ribosome-free peptidyl-tRNAs (with 1 or more amino acids incorporated), which drop off the ribosome during protein synthesis, or as a result of ribosome stalling. Catalyzes the release of premature peptidyl moieties from peptidyl-tRNA molecules trapped in stalled 50S ribosomal subunits, and thus maintains levels of free tRNAs and 50S ribosomes. The polypeptide is Peptidyl-tRNA hydrolase (Polynucleobacter necessarius subsp. necessarius (strain STIR1)).